Here is a 384-residue protein sequence, read N- to C-terminus: tRNA-specific 2-thiouridylase MnmA (384 aa).

ATP-binding positions include 9–16 and Met-35; that span reads GMSGGVDS. Positions 95–97 are interaction with target base in tRNA; that stretch reads NPD. Residue Cys-100 is the Nucleophile of the active site. Cys-100 and Cys-196 are oxidised to a cystine. Gly-124 is an ATP binding site. An interaction with tRNA region spans residues 146-148; the sequence is KDQ. The active-site Cysteine persulfide intermediate is Cys-196. The interaction with tRNA stretch occupies residues 308–309; that stretch reads RY.

It belongs to the MnmA/TRMU family.

Its subcellular location is the cytoplasm. The catalysed reaction is S-sulfanyl-L-cysteinyl-[protein] + uridine(34) in tRNA + AH2 + ATP = 2-thiouridine(34) in tRNA + L-cysteinyl-[protein] + A + AMP + diphosphate + H(+). Catalyzes the 2-thiolation of uridine at the wobble position (U34) of tRNA, leading to the formation of s(2)U34. This chain is tRNA-specific 2-thiouridylase MnmA, found in Paraburkholderia phymatum (strain DSM 17167 / CIP 108236 / LMG 21445 / STM815) (Burkholderia phymatum).